A 57-amino-acid polypeptide reads, in one-letter code: MALTCTDIPKFLCALLLPPIGVWLEKGCTYHLAINILLTILGYIPGIIHACYVILAY.

Transmembrane regions (helical) follow at residues 3-23 (LTCT…IGVW) and 36-56 (ILLT…VILA).

Belongs to the UPF0057 (PMP3) family.

Its subcellular location is the membrane. This is UPF0057 membrane protein T23F2.5 from Caenorhabditis elegans.